The chain runs to 400 residues: Formate-dependent phosphoribosylglycinamide formyltransferase (400 aa).

N(1)-(5-phospho-beta-D-ribosyl)glycinamide contacts are provided by residues 22 to 23 (EL) and Glu82. Residues Arg115, Lys157, 162–167 (SSGKGQ), 197–200 (EGFV), and Glu205 contribute to the ATP site. Residues 120–315 (RLAAETLGLP…EFELHARAIL (196 aa)) form the ATP-grasp domain. Glu274 and Glu286 together coordinate Mg(2+). N(1)-(5-phospho-beta-D-ribosyl)glycinamide-binding positions include Asp293, Lys362, and 369–370 (RR).

This sequence belongs to the PurK/PurT family. Homodimer.

The enzyme catalyses N(1)-(5-phospho-beta-D-ribosyl)glycinamide + formate + ATP = N(2)-formyl-N(1)-(5-phospho-beta-D-ribosyl)glycinamide + ADP + phosphate + H(+). It functions in the pathway purine metabolism; IMP biosynthesis via de novo pathway; N(2)-formyl-N(1)-(5-phospho-D-ribosyl)glycinamide from N(1)-(5-phospho-D-ribosyl)glycinamide (formate route): step 1/1. Involved in the de novo purine biosynthesis. Catalyzes the transfer of formate to 5-phospho-ribosyl-glycinamide (GAR), producing 5-phospho-ribosyl-N-formylglycinamide (FGAR). Formate is provided by PurU via hydrolysis of 10-formyl-tetrahydrofolate. In Mycolicibacterium vanbaalenii (strain DSM 7251 / JCM 13017 / BCRC 16820 / KCTC 9966 / NRRL B-24157 / PYR-1) (Mycobacterium vanbaalenii), this protein is Formate-dependent phosphoribosylglycinamide formyltransferase.